A 176-amino-acid polypeptide reads, in one-letter code: Pituitary adenylate cyclase-activating polypeptide (176 aa).

An N-terminal signal peptide occupies residues 1–24 (MTMCSGARLALLVYGILMHSSVYG). The propeptide occupies 25 to 80 (SPAASGLRFPGIRPENEVYDEDGNPQQDFYDSESLGVGSPASALRDAYALYYPAEE). The interval 98-135 (QPSARRSPADAHGQGLGWDPGGSADDDSEPLSKRHSDG) is disordered. The interval 150–158 (VKKYLAAVL) is important for receptor binding. The residue at position 158 (Leu158) is a Leucine amide. A Lysine amide modification is found at Lys169. A propeptide spanning residues 173–176 (IPYL) is cleaved from the precursor.

Belongs to the glucagon family. In terms of assembly, interacts with ADCYAP1R1 (via N-terminal extracellular domain); both PACAP27 and PACAP38 neuropeptides function as ligand for the ADCYAP1R1 receptor, which modulates the activity of downstream effectors. Interacts with VIPR1 and VIPR2; functions as ligand for VIPR1 and VIPR2 receptors, which modulate the activity of downstream effectors.

The protein resides in the secreted. PACAP is a neuropeptide involved in diverse array of physiological processes through activating the PACAP subfamily of class B1 G protein-coupled receptors: VIP receptor 1 (VIPR1), VIP receptor 2 (VIPR2), and PACAP type I receptor (ADCYAP1R1). Exerts neuroprotective and general cytoprotective effects due to anti-apoptotic, anti-inflammatory, and antioxidant actions. Promotes neuron projection development through the RAPGEF2/Rap1/B-Raf/ERK pathway. In chromaffin cells, induces long-lasting increase of intracellular calcium concentrations and neuroendocrine secretion. Involved in the control of glucose homeostasis, induces insulin secretion by pancreatic beta cells. PACAP exists in two bioactive forms from proteolysis of the same precursor protein, PACAP27 and PACAP38, which differ by eleven amino acid residues in the C-terminus. This Bos taurus (Bovine) protein is Pituitary adenylate cyclase-activating polypeptide (ADCYAP1).